Consider the following 345-residue polypeptide: Dihydroorotate dehydrogenase (quinone) (345 aa).

FMN is bound by residues 65–69 and Thr89; that span reads AGLDK. Residue Lys69 coordinates substrate. Residue 114 to 118 participates in substrate binding; the sequence is NRMGF. FMN contacts are provided by Asn142 and Asn175. Asn175 is a binding site for substrate. Ser178 acts as the Nucleophile in catalysis. Asn180 contacts substrate. Residues Lys220 and Thr248 each contribute to the FMN site. Substrate is bound at residue 249–250; sequence NT. Residues Gly271, Gly300, and 321–322 each bind FMN; that span reads YT.

Belongs to the dihydroorotate dehydrogenase family. Type 2 subfamily. As to quaternary structure, monomer. It depends on FMN as a cofactor.

It is found in the cell membrane. The catalysed reaction is (S)-dihydroorotate + a quinone = orotate + a quinol. It functions in the pathway pyrimidine metabolism; UMP biosynthesis via de novo pathway; orotate from (S)-dihydroorotate (quinone route): step 1/1. Functionally, catalyzes the conversion of dihydroorotate to orotate with quinone as electron acceptor. The protein is Dihydroorotate dehydrogenase (quinone) of Burkholderia thailandensis (strain ATCC 700388 / DSM 13276 / CCUG 48851 / CIP 106301 / E264).